The following is a 311-amino-acid chain: Probable 5-dehydro-4-deoxyglucarate dehydratase (311 aa).

It belongs to the DapA family.

The enzyme catalyses 5-dehydro-4-deoxy-D-glucarate + H(+) = 2,5-dioxopentanoate + CO2 + H2O. It functions in the pathway carbohydrate acid metabolism; D-glucarate degradation; 2,5-dioxopentanoate from D-glucarate: step 2/2. The polypeptide is Probable 5-dehydro-4-deoxyglucarate dehydratase (Ralstonia nicotianae (strain ATCC BAA-1114 / GMI1000) (Ralstonia solanacearum)).